Here is a 459-residue protein sequence, read N- to C-terminus: Xylose/arabinose-binding protein XacG (459 aa).

Residues 19–36 (ALTVGAAAGIAGCTGGGG) form a helical membrane-spanning segment. Residues 27–68 (GIAGCTGGGGTETESTESGNGNGSGGSTDDTETSGSSSGESW) form a disordered region.

The protein belongs to the bacterial solute-binding protein 1 family. In terms of assembly, the complex is composed of two ATP-binding proteins (XacJ and XacK), two transmembrane proteins (XacH and XacI) and a solute-binding protein (XacG).

Its subcellular location is the cell membrane. Its function is as follows. Part of the ABC transporter complex XacGHIJK involved in the uptake of xylose and arabinose. The sequence is that of Xylose/arabinose-binding protein XacG from Haloferax volcanii (strain ATCC 29605 / DSM 3757 / JCM 8879 / NBRC 14742 / NCIMB 2012 / VKM B-1768 / DS2) (Halobacterium volcanii).